The chain runs to 81 residues: CLAVATA3/ESR (CLE)-related protein 12 (81 aa).

A signal peptide spans 1–31; sequence MENSNKVPISKIGLIMLMIFSTFFMSPHARR. Residues 55–67 show a composition bias toward basic and acidic residues; the sequence is KRSRTDLEDKAVP. The segment at 55–81 is disordered; sequence KRSRTDLEDKAVPGDRLSPGGPNHIHN. Hydroxyproline occurs at positions 73 and 76. O-linked (Ara...) hydroxyproline glycosylation occurs at P76.

This sequence belongs to the CLV3/ESR signal peptide family. In terms of processing, the O-glycosylation (arabinosylation) of the hydroxyproline Pro-76 enhances binding affinity of the CLE12p peptide for its receptor. In terms of tissue distribution, expressed in young nodules throughout the central tissue. Expressed in the apical region of elongated nodules, corresponding to the meristematic and early infection zones.

The protein localises to the secreted. Its subcellular location is the extracellular space. Signaling peptide involved in the regulation of nodulation. Moves from root to shoot to function with the receptor kinase SUNN, in a signaling pathway that plays roles during cellular differentiation, both at the onset of nodulation, and later during nodule meristem development and subsequent homeostasis. Interacts with SUNN signaling to control nodule numbers. SUNN is involved in the autoregulation of nodulation (AON), a long distance systemic signaling from root to shoot and back again, which allows legumes to limit the number of root nodules formed based on available nitrogen and previous rhizobial colonization. This is CLAVATA3/ESR (CLE)-related protein 12 from Medicago truncatula (Barrel medic).